We begin with the raw amino-acid sequence, 235 residues long: Sugar fermentation stimulation protein homolog (235 aa).

It belongs to the SfsA family.

This chain is Sugar fermentation stimulation protein homolog, found in Aliivibrio fischeri (strain MJ11) (Vibrio fischeri).